A 79-amino-acid polypeptide reads, in one-letter code: Ponericin-W-like 32.1 (79 aa).

A signal peptide spans 1–23; it reads MKCKKQLLVIFFAYFLVVNESEA. Residues 49 to 79 constitute a propeptide that is removed on maturation; that stretch reads RALMKRDLEDIMDPYQKNLKLDRYLRRLAMD.

Belongs to the non-disulfide-bridged peptide (NDBP) superfamily. Medium-length antimicrobial peptide (group 3) family. Ponericin-W subfamily. As to expression, expressed by the venom gland.

The protein localises to the secreted. The protein resides in the target cell membrane. In terms of biological role, antimicrobial peptide with potent activity against a range of Gram-positive and Gram-negative bacteria. Has high hemolytic activity against erythrocytes. May act by disrupting the integrity of the bacterial cell membrane. In Lychas mucronatus (Chinese swimming scorpion), this protein is Ponericin-W-like 32.1.